The sequence spans 137 residues: Protein MGF 110-7L (137 aa).

The N-terminal stretch at 1–20 (MLVIILGVIGLLASSNLVSS) is a signal peptide. 3 N-linked (GlcNAc...) asparagine; by host glycosylation sites follow: N69, N70, and N105.

Belongs to the asfivirus MGF 110 family.

Functionally, plays a role in virus cell tropism, and may be required for efficient virus replication in macrophages. The protein is Protein MGF 110-7L of African swine fever virus (isolate Pig/Kenya/KEN-50/1950) (ASFV).